The following is a 373-amino-acid chain: IHGDNKTRKGERKLHEERWQAASAAAHQHLSTPQTAAGGGRVLREVTLEMPIRYAPSDAVEKWLNNLLCLDCGSTPNRIIGGTPHPRECELYYVDRDSLFSYHKLSESFLQRIMALYVASHYKNQPNDLQLLSDAPAHHIFVLLGPQAEGQGNAGQLPDVLCVVQVALEGEISKESVAAQLSRGQRASGDLIPWTVAQQFQDNEFAGLSGARVVRIATHPDVTGMGYGSRAVELLTKYYQGELASGEFEEENEAAKPADEESDDESNLLKEKVKPRKALPPLLLPLTDRPAERLHWFGTSFGLTLQLYTFWQRSGFRSVYIRQTANPLTGEHTAIMLNALKCDDLPASPAAGWLDEFVGDARKRFMALLAYEF.

ATP is bound at residue Arg53. Acetyl-CoA-binding positions include 216–218 (IAT) and 223–229 (TGMGYGS). Residues 246–271 (GEFEEENEAAKPADEESDDESNLLKE) form a disordered region. Residue Arg313 participates in acetyl-CoA binding.

The protein belongs to the RNA cytidine acetyltransferase family. NAT10 subfamily.

The protein resides in the nucleus. It is found in the nucleolus. The catalysed reaction is a cytidine in 18S rRNA + acetyl-CoA + ATP + H2O = an N(4)-acetylcytidine in 18S rRNA + ADP + phosphate + CoA + H(+). It carries out the reaction a cytidine in tRNA + acetyl-CoA + ATP + H2O = an N(4)-acetylcytidine in tRNA + ADP + phosphate + CoA + H(+). RNA cytidine acetyltransferase with specificity toward both 18S rRNA and tRNAs. Catalyzes the formation of N(4)-acetylcytidine (ac4C) in 18S rRNA. Required for early nucleolar cleavages of precursor rRNA at sites A0, A1 and A2 during 18S rRNA synthesis. Catalyzes the formation of ac4C in serine and leucine tRNAs. Requires a tRNA-binding adapter protein for full tRNA acetyltransferase activity but not for 18S rRNA acetylation. The sequence is that of RNA cytidine acetyltransferase from Achlya ambisexualis (Water mold).